The sequence spans 687 residues: Adhesion G-protein coupled receptor G1 (687 aa).

An N-terminal signal peptide occupies residues 1 to 25 (MTAQSLLQMTLFLLSLLFLVQGAHG). Residue 26-33 (RGHREDFR) participates in heparin binding. Over 26-402 (RGHREDFRFC…VEVDAVHKHY (377 aa)) the chain is Extracellular. Intrachain disulfides connect Cys-35–Cys-91 and Cys-121–Cys-177. Residues Asn-39, Asn-148, and Asn-171 are each glycosylated (N-linked (GlcNAc...) asparagine). A heparin-binding site is contributed by 190-200 (LKHPQKASRRP). Positions 224-395 (DTVSFEEDRI…AVLMVSSVEV (172 aa)) constitute a GAIN-B domain. 4 N-linked (GlcNAc...) asparagine glycosylation sites follow: Asn-234, Asn-303, Asn-324, and Asn-341. 2 disulfide bridges follow: Cys-346–Cys-377 and Cys-366–Cys-379. The GPS stretch occupies residues 346-395 (CVFWVEDPTLSSPGHWSSAGCETVRRETQTSCFCNHLTYFAVLMVSSVEV). Residues 384-397 (YFAVLMVSSVEVDA) form a stachel region. The chain crosses the membrane as a helical span at residues 403-423 (LSLLSYVGCVISALACVVTIA). Topologically, residues 424 to 442 (AYLCSRRKPRDYTIKVHMN) are cytoplasmic. The helical transmembrane segment at 443-463 (LLLAVFLLDMSFLLSEPVALT) threads the bilayer. Over 464–470 (GSEAGCR) the chain is Extracellular. The helical transmembrane segment at 471 to 491 (AGAIFLHFSLLACLSWMGLEG) threads the bilayer. Residues 492-512 (YNLYRLVVEVFGTYVPGYLLK) are Cytoplasmic-facing. The helical transmembrane segment at 513–533 (LSAMGWGFPIFLVTLVALVDV) threads the bilayer. Residues 534–570 (DNYGPIILAVHRTPESVIYPSMCWIRDSLVSYVTNLG) are Extracellular-facing. A helical membrane pass occupies residues 571–591 (LFSLVFLFNMAMLGTMVVQIL). Residues 592–603 (RLRPHTQKWSHV) lie on the Cytoplasmic side of the membrane. Residues 604–624 (LTLLGLSLVLGLPWALIFFSF) traverse the membrane as a helical segment. Residues 625 to 630 (ASGTFQ) lie on the Extracellular side of the membrane. The helical transmembrane segment at 631-651 (LVVLYLFSIITSFQGFLIFIW) threads the bilayer. The Cytoplasmic portion of the chain corresponds to 652–687 (YWSMRLQARGGPSPLKSNSDSARLPISSGSTSSSRI). Residues 664–687 (SPLKSNSDSARLPISSGSTSSSRI) are disordered. The segment covering 678–687 (SSGSTSSSRI) has biased composition (low complexity).

The protein belongs to the G-protein coupled receptor 2 family. LN-TM7 subfamily. As to quaternary structure, heterodimer of 2 chains generated by proteolytic processing; the large extracellular N-terminal fragment (ADGRG1 NT) and the membrane-bound C-terminal fragment (ADGRG1-CT) predominantly remain associated and non-covalently linked. ADGRG1 NT self-associates in a trans-trans manner; the homophilic interaction enhances receptor signaling. Interacts with TGM2. Interacts with heparin; leading to the reduction of ADGRG1 shedding. Interacts with COL3A1. Part of a GPCR-tetraspanin complex at least consisting of ADGRG1, CD81, eventually CD9, and GNA11 in which CD81 is enhancing the association of ADGRG1 with GNA11. Autoproteolytically cleaved into 2 fragments; the large extracellular N-terminal fragment (ADGRG1 NT) and the membrane-bound C-terminal fragment (ADGRG1 CT) predominantly remain associated and non-covalently linked. Shedding to yield the secreted ADGRG1 N-terminal fragment seems to involve metalloprotease(s). In terms of processing, ubiquitinated. Undergoes polyubiquitination upon activation.

Its subcellular location is the cell membrane. The protein localises to the secreted. It localises to the membrane raft. Its activity is regulated as follows. Forms a heterodimer of 2 chains generated by proteolytic processing that remain associated through non-covalent interactions mediated by the GAIN-B domain. In the inactivated receptor, the Stachel sequence (also named stalk) is embedded in the GAIN-B domain, where it adopts a beta-strand conformation. On activation, the Stachel moves into the 7 transmembrane region and adopts a twisted hook-shaped configuration that forms contacts within the receptor, leading to coupling of a G-alpha protein, which activates signaling. The cleaved GAIN-B and N-terminal domains can then dissociate from the rest of the receptor. Functionally, adhesion G-protein coupled receptor (aGPCR) for steroid hormone 17alpha-hydroxypregnenolone (17-OH), which is involved in cell adhesion and cell-cell interactions. Ligand binding causes a conformation change that triggers signaling via guanine nucleotide-binding proteins (G proteins) and modulates the activity of downstream effectors, such as RhoA pathway. ADGRG1 is coupled to G(12) and/or G(13) G proteins (GNA12 and GNA13, respectively) and mediates the activation Rho small GTPases. Acts as a potent suppressor of ferroptosis: binding to 17-OH-binding initiates signaling that down-regulates CD36 and alleviates ferroptosis-induced liver injury. Ligand-binding also induces cell adhesion activity via association with proteins such as collagen III/COL3A1 and TGM2. Mediates cell matrix adhesion in developing neurons and hematopoietic stem cells. Involved in cortical development, specifically in maintenance of the pial basement membrane integrity and in cortical lamination: association with COL3A1 in the developing brain inhibits neuronal migration via activation of the RhoA pathway. Together with TGM2, acts as a regulator of myelination and myelin repair in oligodendrocyte precursor cells. Acts as a hemostatic sensor of shear force: G protein-coupled receptor signaling is activated in response to shear force in platelets, promoting G(13) G protein signaling, and platelet shape change and aggregation in a COL3A1-dependent manner. Acts as an inhibitor of VEGFA production thereby inhibiting angiogenesis through a signaling pathway mediated by PRKCA. Plays a role in the maintenance of hematopoietic stem cells in bone marrow niche. Plays an essential role in testis development. This is Adhesion G-protein coupled receptor G1 (ADGRG1) from Pongo pygmaeus (Bornean orangutan).